We begin with the raw amino-acid sequence, 155 residues long: Small ribosomal subunit protein uS7cz/uS7cy (155 aa).

It belongs to the universal ribosomal protein uS7 family. As to quaternary structure, part of the 30S ribosomal subunit.

The protein resides in the plastid. The protein localises to the chloroplast. Functionally, one of the primary rRNA binding proteins, it binds directly to 16S rRNA where it nucleates assembly of the head domain of the 30S subunit. This chain is Small ribosomal subunit protein uS7cz/uS7cy (rps7-A), found in Eucalyptus globulus subsp. globulus (Tasmanian blue gum).